The following is a 1012-amino-acid chain: PHD finger protein 20 (1012 aa).

2 consecutive Tudor domains span residues 4–69 (HPPN…RPLE) and 83–147 (GSSE…GNAR). The tract at residues 142–336 (IVGNARPKET…RSSRLSTNGT (195 aa)) is disordered. The span at 147 to 245 (RPKETDHKSL…QVDKKPENDI (99 aa)) shows a compositional bias: basic and acidic residues. At Ser-159 the chain carries Phosphoserine. A DNA-binding region (a.T hook) is located at residues 257-269 (KRKRGRPPSIAPT). Polar residues predominate over residues 271-280 (VDSNSQTLQP). Residues 297 to 325 (PLKRPRLDKNSSQEKSKNYSENTDKDLSR) show a composition bias toward basic and acidic residues. The C2H2-type zinc finger occupies 452-477 (FRCKVVDCLKFFRKAKLLHYHMKYFH). Residues 481 to 490 (KSLEPEESPG) show a composition bias toward basic and acidic residues. The tract at residues 481–611 (KSLEPEESPG…KGKVKALEED (131 aa)) is disordered. Ser-488 bears the Phosphoserine mark. Over residues 497-509 (RGPSASDKPSQET) the composition is skewed to polar residues. Residues 522–538 (TKDKEKNKEKKFKEFVR) show a composition bias toward basic and acidic residues. Over residues 539–551 (VKPKKKKKKKKKT) the composition is skewed to basic residues. A PHD-type zinc finger spans residues 654–700 (RCICEVQEENDFMIQCEECQCWQHGVCMGLLEENVPEKYTCYVCQDP). Position 843 is an N6-acetyllysine (Lys-843). Positions 866–912 (DAVNPLHENGDDSLSPRLGWPLDQDRSKGDSDPKPGSPKVKEYVSKK) are disordered. 2 positions are modified to phosphoserine: Ser-878 and Ser-880. Basic and acidic residues predominate over residues 888 to 912 (DQDRSKGDSDPKPGSPKVKEYVSKK).

As to quaternary structure, homodimer; disulfide-linked. Component of some MLL1/MLL complex, at least composed of the core components KMT2A/MLL1, ASH2L, HCFC1, WDR5 and RBBP5, as well as the facultative components BACC1, CHD8, E2F6, HSP70, INO80C, KANSL1, LAS1L, MAX, MCRS1, MGA, KAT8/MOF, PELP1, PHF20, PRP31, RING2, RUVB1/TIP49A, RUVB2/TIP49B, SENP3, TAF1, TAF4, TAF6, TAF7, TAF9 and TEX10. Component of the NSL complex at least composed of MOF/KAT8, KANSL1, KANSL2, KANSL3, MCRS1, PHF20, OGT1/OGT, WDR5 and HCFC1. Ubiquitinated by TRIM26; leading to proteasomal degradation. As to expression, expressed in heart, kidney, liver, lung, pancreas, placenta, spleen and testis. Not expressed in brain, skeletal muscle, colon, ovary, prostate, small intestine and thymus. Expressed in colon and ovary cancer cell lines while it is not expressed in the respective normal tissues.

The protein localises to the nucleus. Methyllysine-binding protein, component of the MOF histone acetyltransferase protein complex. Not required for maintaining the global histone H4 'Lys-16' acetylation (H4K16ac) levels or locus specific histone acetylation, but instead works downstream in transcriptional regulation of MOF target genes. As part of the NSL complex it may be involved in acetylation of nucleosomal histone H4 on several lysine residues. Contributes to methyllysine-dependent p53/TP53 stabilization and up-regulation after DNA damage. In Homo sapiens (Human), this protein is PHD finger protein 20 (PHF20).